A 141-amino-acid chain; its full sequence is Nucleoside diphosphate kinase (141 aa).

Positions 11, 59, 87, 93, 104, and 114 each coordinate ATP. His-117 functions as the Pros-phosphohistidine intermediate in the catalytic mechanism.

The protein belongs to the NDK family. In terms of assembly, homotetramer. It depends on Mg(2+) as a cofactor.

The protein localises to the cytoplasm. It carries out the reaction a 2'-deoxyribonucleoside 5'-diphosphate + ATP = a 2'-deoxyribonucleoside 5'-triphosphate + ADP. It catalyses the reaction a ribonucleoside 5'-diphosphate + ATP = a ribonucleoside 5'-triphosphate + ADP. Functionally, major role in the synthesis of nucleoside triphosphates other than ATP. The ATP gamma phosphate is transferred to the NDP beta phosphate via a ping-pong mechanism, using a phosphorylated active-site intermediate. The protein is Nucleoside diphosphate kinase of Leptothrix cholodnii (strain ATCC 51168 / LMG 8142 / SP-6) (Leptothrix discophora (strain SP-6)).